Reading from the N-terminus, the 150-residue chain is Non-specific lipid transfer protein GPI-anchored 7 (150 aa).

The signal sequence occupies residues 1–25 (MTKTMMIFAAAMTVMALLLVPTIEA). 4 cysteine pairs are disulfide-bonded: cysteine 29/cysteine 66, cysteine 36/cysteine 50, cysteine 51/cysteine 92, and cysteine 64/cysteine 101. N-linked (GlcNAc...) asparagine glycosylation is found at asparagine 41, asparagine 79, and asparagine 93. Residues 103–125 (AKGAPSPKASLPPPAPAGNTKKD) are disordered. The GPI-anchor amidated aspartate moiety is linked to residue aspartate 125. The propeptide at 126 to 150 (AGAGNKLAGYGVTTVILSLISSIFF) is removed in mature form.

This sequence belongs to the plant LTP family. In terms of tissue distribution, up-regulated in the epidermis of stems.

The protein localises to the cell membrane. Its function is as follows. Probable lipid transfer protein. The sequence is that of Non-specific lipid transfer protein GPI-anchored 7 from Arabidopsis thaliana (Mouse-ear cress).